The primary structure comprises 160 residues: Small ribosomal subunit protein uS19 (160 aa).

It belongs to the universal ribosomal protein uS19 family.

Protein S19 forms a complex with S13 that binds strongly to the 16S ribosomal RNA. The sequence is that of Small ribosomal subunit protein uS19 from Pyrobaculum islandicum (strain DSM 4184 / JCM 9189 / GEO3).